The following is a 128-amino-acid chain: Aspartate 1-decarboxylase (128 aa).

Ser-25 functions as the Schiff-base intermediate with substrate; via pyruvic acid in the catalytic mechanism. A Pyruvic acid (Ser) modification is found at Ser-25. Thr-57 lines the substrate pocket. Tyr-58 acts as the Proton donor in catalysis. Residue 73–75 (GAA) participates in substrate binding.

The protein belongs to the PanD family. As to quaternary structure, heterooctamer of four alpha and four beta subunits. The cofactor is pyruvate. In terms of processing, is synthesized initially as an inactive proenzyme, which is activated by self-cleavage at a specific serine bond to produce a beta-subunit with a hydroxyl group at its C-terminus and an alpha-subunit with a pyruvoyl group at its N-terminus.

It is found in the cytoplasm. It catalyses the reaction L-aspartate + H(+) = beta-alanine + CO2. It functions in the pathway cofactor biosynthesis; (R)-pantothenate biosynthesis; beta-alanine from L-aspartate: step 1/1. In terms of biological role, catalyzes the pyruvoyl-dependent decarboxylation of aspartate to produce beta-alanine. This is Aspartate 1-decarboxylase from Caldicellulosiruptor bescii (strain ATCC BAA-1888 / DSM 6725 / KCTC 15123 / Z-1320) (Anaerocellum thermophilum).